The sequence spans 396 residues: Probable sugar efflux transporter (396 aa).

A run of 12 helical transmembrane segments spans residues 15–35 (VVTL…PVGL), 50–70 (VGIM…PFML), 81–101 (LICL…SWSF), 103–123 (VLVI…SITA), 136–156 (AQAL…GLPL), 170–190 (FFAI…LLPL), 209–229 (PALM…YTAY), 246–266 (FATA…VIFG), 275–295 (ALVS…LPAA), 299–319 (IHLG…GLGM), 333–353 (VAMA…ALVG), and 364–384 (MIGY…IIIF).

Belongs to the major facilitator superfamily. SotB (TC 2.A.1.2) family.

It localises to the cell inner membrane. Its function is as follows. Involved in the efflux of sugars. The physiological role may be the reduction of the intracellular concentration of toxic sugars or sugar metabolites. The sequence is that of Probable sugar efflux transporter from Shigella boydii serotype 18 (strain CDC 3083-94 / BS512).